A 152-amino-acid chain; its full sequence is UPF0178 protein NIS_0137 (152 aa).

Belongs to the UPF0178 family.

In Nitratiruptor sp. (strain SB155-2), this protein is UPF0178 protein NIS_0137.